The following is a 534-amino-acid chain: (R)-citramalate synthase (534 aa).

The 264-residue stretch at 11–274 (FHVFDTTLRD…KQVLPEGRLR (264 aa)) folds into the Pyruvate carboxyltransferase domain.

Belongs to the alpha-IPM synthase/homocitrate synthase family.

It carries out the reaction pyruvate + acetyl-CoA + H2O = (3R)-citramalate + CoA + H(+). Its pathway is amino-acid biosynthesis; L-isoleucine biosynthesis; 2-oxobutanoate from pyruvate: step 1/3. In terms of biological role, catalyzes the condensation of pyruvate and acetyl-coenzyme A to form (R)-citramalate. In Streptomyces coelicolor (strain ATCC BAA-471 / A3(2) / M145), this protein is (R)-citramalate synthase.